The sequence spans 207 residues: Large ribosomal subunit protein uL4 (207 aa).

The segment at 50-76 (KTKTVSEVSGTTKKPFKQKGTGNARQG) is disordered.

It belongs to the universal ribosomal protein uL4 family. In terms of assembly, part of the 50S ribosomal subunit.

Its function is as follows. One of the primary rRNA binding proteins, this protein initially binds near the 5'-end of the 23S rRNA. It is important during the early stages of 50S assembly. It makes multiple contacts with different domains of the 23S rRNA in the assembled 50S subunit and ribosome. Forms part of the polypeptide exit tunnel. This chain is Large ribosomal subunit protein uL4, found in Rickettsia typhi (strain ATCC VR-144 / Wilmington).